The sequence spans 227 residues: Putative methylase YubD (227 aa).

The protein belongs to the N(4)/N(6)-methyltransferase family.

Its function is as follows. A putative beta subtype methylase whose recognition site is unknown. This chain is Putative methylase YubD (yubD), found in Escherichia coli (strain K12).